A 328-amino-acid chain; its full sequence is Arabinose 5-phosphate isomerase KdsD (328 aa).

Positions 41–184 constitute an SIS domain; that stretch reads ACEKMFNCTG…AVALLKARGF (144 aa). Substrate is bound by residues 75 to 76, H82, H88, 114 to 123, and 148 to 150; these read GT, ALIPVLKRLH, and KVP. Zn(2+) is bound at residue H82. The CBS 1 domain occupies 210-268; it reads MHTGDEIPHVNKHATLRDALLEITRKNLGMTVICDESMKIDGIFTDGDLRRMFDMGGDM. Position 275 (E275) interacts with substrate. Positions 277–328 constitute a CBS 2 domain; it reads MTPGGIRVRPGILAVDALNLMQSRHITSVLVADGDQLLGVLHMHDLLRAGVV.

It belongs to the SIS family. GutQ/KpsF subfamily. As to quaternary structure, homotetramer.

It catalyses the reaction D-arabinose 5-phosphate = D-ribulose 5-phosphate. The protein operates within carbohydrate biosynthesis; 3-deoxy-D-manno-octulosonate biosynthesis; 3-deoxy-D-manno-octulosonate from D-ribulose 5-phosphate: step 1/3. It participates in bacterial outer membrane biogenesis; lipopolysaccharide biosynthesis. In terms of biological role, involved in the biosynthesis of 3-deoxy-D-manno-octulosonate (KDO), a unique 8-carbon sugar component of lipopolysaccharides (LPSs). Catalyzes the reversible aldol-ketol isomerization between D-ribulose 5-phosphate (Ru5P) and D-arabinose 5-phosphate (A5P). The protein is Arabinose 5-phosphate isomerase KdsD (kdsD) of Salmonella typhi.